The sequence spans 284 residues: Diaminopimelate epimerase (284 aa).

The substrate site is built by asparagine 20, glutamine 53, and asparagine 73. Cysteine 82 functions as the Proton donor in the catalytic mechanism. Substrate is bound by residues 83–84, asparagine 167, asparagine 200, and 218–219; these read GN and ER. Residue cysteine 227 is the Proton acceptor of the active site. Residue 228–229 coordinates substrate; sequence GS.

The protein belongs to the diaminopimelate epimerase family. Homodimer.

The protein resides in the cytoplasm. The catalysed reaction is (2S,6S)-2,6-diaminopimelate = meso-2,6-diaminopimelate. It participates in amino-acid biosynthesis; L-lysine biosynthesis via DAP pathway; DL-2,6-diaminopimelate from LL-2,6-diaminopimelate: step 1/1. Catalyzes the stereoinversion of LL-2,6-diaminopimelate (L,L-DAP) to meso-diaminopimelate (meso-DAP), a precursor of L-lysine and an essential component of the bacterial peptidoglycan. This is Diaminopimelate epimerase from Xanthomonas euvesicatoria pv. vesicatoria (strain 85-10) (Xanthomonas campestris pv. vesicatoria).